We begin with the raw amino-acid sequence, 645 residues long: uncharacterized protein (645 aa).

Residues 1-23 form the signal peptide; the sequence is MPSSHRLSATILIFLSLTYISSS. Disordered regions lie at residues 30–58 and 92–129; these read ITDK…TTAS and NSNA…AGIP. Residues 92–102 show a composition bias toward polar residues; it reads NSNANPYFSTT. An N-linked (GlcNAc...) asparagine glycan is attached at Asn-107. Positions 107–119 are enriched in basic and acidic residues; sequence NRSDSSQKARDPD. The 80-residue stretch at 135 to 214 folds into the PAN 1 domain; sequence CFRRYENSII…QTRDYFEPTD (80 aa). 2 cysteine pairs are disulfide-bonded: Cys-161-Cys-187 and Cys-165-Cys-175. Positions 225 to 247 are disordered; it reads ESSSSAPSSEDEDSPPSPPPSAP. 2 consecutive PAN domains span residues 281–369 and 378–465; these read CPRG…EKIC and CPST…EVEC. Intrachain disulfides connect Cys-281–Cys-369, Cys-313–Cys-341, Cys-317–Cys-329, Cys-378–Cys-465, Cys-407–Cys-436, and Cys-411–Cys-422. A glycan (N-linked (GlcNAc...) asparagine) is linked at Asn-421. Basic and acidic residues predominate over residues 556-567; it reads AGELENNDHEQI. The interval 556–582 is disordered; sequence AGELENNDHEQIEDNNTDASEDPVPTK. The N-linked (GlcNAc...) asparagine glycan is linked to Asn-570.

This is an uncharacterized protein from Caenorhabditis elegans.